The primary structure comprises 62 residues: Small ribosomal subunit protein eS27 (62 aa).

Cys17, Cys20, Cys36, and Cys39 together coordinate Zn(2+). The C4-type zinc finger occupies 17-39 (CNDCENEQIIFGSASRKITCVVC).

It belongs to the eukaryotic ribosomal protein eS27 family. Part of the 30S ribosomal subunit. Requires Zn(2+) as cofactor.

The protein is Small ribosomal subunit protein eS27 of Methanosarcina barkeri (strain Fusaro / DSM 804).